A 64-amino-acid chain; its full sequence is Ribosome biogenesis protein Nop10 (64 aa).

Belongs to the NOP10 family.

Functionally, involved in ribosome biogenesis; more specifically in 18S rRNA pseudouridylation and in cleavage of pre-rRNA. This Ignicoccus hospitalis (strain KIN4/I / DSM 18386 / JCM 14125) protein is Ribosome biogenesis protein Nop10.